The chain runs to 739 residues: Adenosylcobalamin-dependent ribonucleoside-triphosphate reductase (739 aa).

Cys119 and Cys419 are oxidised to a cystine. The tract at residues 147 to 158 (SMPFSFLFDELM) is effector region-1. An effector region-2 region spans residues 168 to 313 (ARSNISQIPR…ICNLIGKAVV (146 aa)). Catalysis depends on residues Cys408 and Glu410. Residues 565–626 (FHYGAYLIQR…NPNFASAGTV (62 aa)) are adenosylcobalamin-binding-1. The segment at 685-724 (LQQAPKEPIDKETYEKRSQEITGNVEEVFSQLNSDVKDLE) is adenosylcobalamin-binding-2.

Belongs to the class II ribonucleoside-triphosphate reductase family. Monomer. It depends on adenosylcob(III)alamin as a cofactor.

It catalyses the reaction a 2'-deoxyribonucleoside 5'-triphosphate + [thioredoxin]-disulfide + H2O = a ribonucleoside 5'-triphosphate + [thioredoxin]-dithiol. Its activity is regulated as follows. Allosterically regulated by ATP and dNTP. The sequence is that of Adenosylcobalamin-dependent ribonucleoside-triphosphate reductase (rtpR) from Lactobacillus delbrueckii subsp. bulgaricus (strain ATCC BAA-365 / Lb-18).